Reading from the N-terminus, the 354-residue chain is Rhodopsin (354 aa).

Over 1–36 (MNGTEGPYFYVPMVNTTGIVRSPYEYPQYYLVSPAA) the chain is Extracellular. N-linked (GlcNAc...) asparagine glycosylation is found at asparagine 2 and asparagine 15. A helical transmembrane segment spans residues 37-61 (YACLGAYMFFLILVGFPVNFLTLYV). The Cytoplasmic segment spans residues 62–73 (TIEHKKLRTPLN). Residues 74 to 96 (YILLNLAVADLFMVFGGFTTTIY) form a helical membrane-spanning segment. The Extracellular segment spans residues 97–110 (TSMHGYFVLGRLGC). Cysteine 110 and cysteine 187 form a disulfide bridge. A helical transmembrane segment spans residues 111-133 (NLEGYFATLGGEIGLWSLVVLAV). A 'Ionic lock' involved in activated form stabilization motif is present at residues 134–136 (ERW). At 134–152 (ERWLVVCKPISNFRFTENH) the chain is on the cytoplasmic side. Residues 153 to 173 (AIMGLVFTWIMANACAAPPLL) form a helical membrane-spanning segment. At 174 to 202 (GWSRYIPEGMQCSCGVDYYTRAEGFNNES) the chain is on the extracellular side. Residues 203–224 (FVIYMFICHFCIPLVVVFFCYG) form a helical membrane-spanning segment. Residues 225–252 (RLLCAVKEAAAAQQESETTQRAEREVTR) lie on the Cytoplasmic side of the membrane. Residues 253-274 (MVVILVIGFLVCWTPYASVAWY) form a helical membrane-spanning segment. Residues 275–286 (IFSNQGSEFGPL) are Extracellular-facing. A helical transmembrane segment spans residues 287 to 308 (FMTIPAFFAKSSSIYNPMIYIC). Lysine 296 bears the N6-(retinylidene)lysine mark. Topologically, residues 309-354 (MNKQFRHCMITTLCCGKNPFEEEEGASTTASKTEASSVSSSSVSPA) are cytoplasmic. S-palmitoyl cysteine attachment occurs at residues cysteine 322 and cysteine 323. Residues 333-354 (GASTTASKTEASSVSSSSVSPA) are disordered. The span at 334 to 354 (ASTTASKTEASSVSSSSVSPA) shows a compositional bias: low complexity.

The protein belongs to the G-protein coupled receptor 1 family. Opsin subfamily. Post-translationally, phosphorylated on some or all of the serine and threonine residues present in the C-terminal region. In terms of processing, contains one covalently linked retinal chromophore.

The protein localises to the membrane. The protein resides in the cell projection. It is found in the cilium. It localises to the photoreceptor outer segment. In terms of biological role, photoreceptor required for image-forming vision at low light intensity. While most salt water fish species use retinal as chromophore, most freshwater fish use 3-dehydroretinal, or a mixture of retinal and 3-dehydroretinal. Light-induced isomerization of 11-cis to all-trans retinal triggers a conformational change that activates signaling via G-proteins. Subsequent receptor phosphorylation mediates displacement of the bound G-protein alpha subunit by arrestin and terminates signaling. The sequence is that of Rhodopsin (rho) from Gambusia affinis (Western mosquitofish).